The following is a 515-amino-acid chain: 1-pyrroline-5-carboxylate dehydrogenase 2 (515 aa).

Residues Glu-286 and Cys-320 contribute to the active site.

This sequence belongs to the aldehyde dehydrogenase family. RocA subfamily.

The catalysed reaction is L-glutamate 5-semialdehyde + NAD(+) + H2O = L-glutamate + NADH + 2 H(+). It participates in amino-acid degradation; L-proline degradation into L-glutamate; L-glutamate from L-proline: step 2/2. Important for the use of proline as a sole carbon and energy source or a sole nitrogen source. The protein is 1-pyrroline-5-carboxylate dehydrogenase 2 of Bacillus subtilis (strain 168).